Reading from the N-terminus, the 1102-residue chain is WD repeat-containing protein 72 (1102 aa).

WD repeat units follow at residues 15–54, 60–102, 160–197, 318–362, 402–441, 459–504, 507–552, and 555–594; these read APPHSITAIMITDDQRTIVTGSQEGQLCLWNLSHELKISA, GHSA…CMEK, NCMCIVHSMRIQEDSLLVVSVAGELKVWDLSSSINSIQ, KEQS…VSKF, AGTAVVTSSEYIPSLDKLICGCEDGTIIITQALNAAKARL, GHHQ…ILHK, LEAG…CLLH, and KHLFPVRMIKWHPVENFLIVGCADDSVYIWEIETGTLERH. S1081 and S1083 each carry phosphoserine.

It is found in the cytoplasmic vesicle. In terms of biological role, plays a major role in formation of tooth enamel. Specifically required during the maturation phase of amelogenesis for normal formation of the enamel matrix and clearance of enamel proteins. May be involved in localization of the calcium transporter SLC24A4 to the ameloblast cell membrane. The protein is WD repeat-containing protein 72 (WDR72) of Homo sapiens (Human).